A 63-amino-acid polypeptide reads, in one-letter code: ATP synthase F(0) complex subunit 8 (63 aa).

Residues 8–24 form a helical membrane-spanning segment; sequence TWFLTILSVMLTLFTLL. K57 carries the post-translational modification N6-acetyllysine.

The protein belongs to the ATPase protein 8 family. In terms of assembly, component of the ATP synthase complex composed at least of ATP5F1A/subunit alpha, ATP5F1B/subunit beta, ATP5MC1/subunit c (homooctomer), MT-ATP6/subunit a, MT-ATP8/subunit 8, ATP5ME/subunit e, ATP5MF/subunit f, ATP5MG/subunit g, ATP5MK/subunit k, ATP5MJ/subunit j, ATP5F1C/subunit gamma, ATP5F1D/subunit delta, ATP5F1E/subunit epsilon, ATP5PF/subunit F6, ATP5PB/subunit b, ATP5PD/subunit d, ATP5PO/subunit OSCP. ATP synthase complex consists of a soluble F(1) head domain (subunits alpha(3) and beta(3)) - the catalytic core - and a membrane F(0) domain - the membrane proton channel (subunits c, a, 8, e, f, g, k and j). These two domains are linked by a central stalk (subunits gamma, delta, and epsilon) rotating inside the F1 region and a stationary peripheral stalk (subunits F6, b, d, and OSCP). Interacts with PRICKLE3.

Its subcellular location is the mitochondrion membrane. Its function is as follows. Subunit 8, of the mitochondrial membrane ATP synthase complex (F(1)F(0) ATP synthase or Complex V) that produces ATP from ADP in the presence of a proton gradient across the membrane which is generated by electron transport complexes of the respiratory chain. ATP synthase complex consist of a soluble F(1) head domain - the catalytic core - and a membrane F(1) domain - the membrane proton channel. These two domains are linked by a central stalk rotating inside the F(1) region and a stationary peripheral stalk. During catalysis, ATP synthesis in the catalytic domain of F(1) is coupled via a rotary mechanism of the central stalk subunits to proton translocation. In vivo, can only synthesize ATP although its ATP hydrolase activity can be activated artificially in vitro. Part of the complex F(0) domain. This chain is ATP synthase F(0) complex subunit 8, found in Physeter macrocephalus (Sperm whale).